The following is a 493-amino-acid chain: Cysteine--tRNA ligase (493 aa).

Cys-29 provides a ligand contact to Zn(2+). Residues 31 to 41 (VTVYDLSHIGH) carry the 'HIGH' region motif. Zn(2+) is bound by residues Cys-209, His-234, and Glu-238. Positions 266–270 (KMSKS) match the 'KMSKS' region motif. Lys-269 provides a ligand contact to ATP.

Belongs to the class-I aminoacyl-tRNA synthetase family. In terms of assembly, monomer. Requires Zn(2+) as cofactor.

The protein resides in the cytoplasm. The catalysed reaction is tRNA(Cys) + L-cysteine + ATP = L-cysteinyl-tRNA(Cys) + AMP + diphosphate. In Syntrophobacter fumaroxidans (strain DSM 10017 / MPOB), this protein is Cysteine--tRNA ligase.